A 245-amino-acid polypeptide reads, in one-letter code: MIIPALDLIDGTVVRLHQGDYARQREYGNDPLPRLQDYAAQGAGVLHLVDLTGAKDPAKRQIPLIKTLVAGVNVPVQVGGGVRTEEDVAALLKAGVARVVIGSTAVKSPDVVKGWFERFGAQALVLALDVRIDEHGNKQVAVSGWQENSGVSLEQLVETYLPVGLKHVLCTDISRDGTLAGSNVSLYEEVCARYPQIAFQSSGGIGNIDDIAALRGTGVRGVIVGRALLEGKFTVKEAIQCWQNV.

Asp-7 acts as the Proton acceptor in catalysis. Residue Asp-129 is the Proton donor of the active site.

The protein belongs to the HisA/HisF family.

Its subcellular location is the cytoplasm. It carries out the reaction 1-(5-phospho-beta-D-ribosyl)-5-[(5-phospho-beta-D-ribosylamino)methylideneamino]imidazole-4-carboxamide = 5-[(5-phospho-1-deoxy-D-ribulos-1-ylimino)methylamino]-1-(5-phospho-beta-D-ribosyl)imidazole-4-carboxamide. Its pathway is amino-acid biosynthesis; L-histidine biosynthesis; L-histidine from 5-phospho-alpha-D-ribose 1-diphosphate: step 4/9. The protein is 1-(5-phosphoribosyl)-5-[(5-phosphoribosylamino)methylideneamino] imidazole-4-carboxamide isomerase of Salmonella choleraesuis (strain SC-B67).